We begin with the raw amino-acid sequence, 73 residues long: Defensin-like protein 6 (73 aa).

The N-terminal stretch at 1 to 26 (MENKFFAAFFLLLVLFSSQEIIGGEG) is a signal peptide. Intrachain disulfides connect C29-C73, C40-C60, C46-C67, and C50-C69.

Belongs to the DEFL family.

Its subcellular location is the secreted. Functionally, confers broad-spectrum resistance to pathogens. The chain is Defensin-like protein 6 (PDF2.5) from Arabidopsis thaliana (Mouse-ear cress).